We begin with the raw amino-acid sequence, 413 residues long: Precorrin-6Y C(5,15)-methyltransferase [decarboxylating] (413 aa).

The protein belongs to the precorrin methyltransferase family.

It carries out the reaction precorrin-6B + 2 S-adenosyl-L-methionine = precorrin-8X + 2 S-adenosyl-L-homocysteine + CO2 + 3 H(+). The protein operates within cofactor biosynthesis; adenosylcobalamin biosynthesis; cob(II)yrinate a,c-diamide from precorrin-2 (aerobic route): step 7/10. In terms of biological role, catalyzes the methylation of both C-5 and C-15 in precorrin-6Y to form precorrin-8X. In Sinorhizobium sp, this protein is Precorrin-6Y C(5,15)-methyltransferase [decarboxylating] (cobL).